The chain runs to 272 residues: Phosphonates import ATP-binding protein PhnC (272 aa).

Residues 2–244 (LVFDKVNRVY…IQKRLYEIEH (243 aa)) enclose the ABC transporter domain. ATP is bound at residue 35 to 42 (GPSGAGKS).

This sequence belongs to the ABC transporter superfamily. Phosphonates importer (TC 3.A.1.9.1) family. As to quaternary structure, the complex is composed of two ATP-binding proteins (PhnC), two transmembrane proteins (PhnE) and a solute-binding protein (PhnD).

It is found in the cell inner membrane. It catalyses the reaction phosphonate(out) + ATP + H2O = phosphonate(in) + ADP + phosphate + H(+). Functionally, part of the ABC transporter complex PhnCDE involved in phosphonates import. Responsible for energy coupling to the transport system. The chain is Phosphonates import ATP-binding protein PhnC from Hydrogenovibrio crunogenus (strain DSM 25203 / XCL-2) (Thiomicrospira crunogena).